The chain runs to 309 residues: Homoserine O-succinyltransferase (309 aa).

The Acyl-thioester intermediate role is filled by Cys142. Residues Lys163 and Ser192 each coordinate substrate. His235 acts as the Proton acceptor in catalysis. Glu237 is an active-site residue. Substrate is bound at residue Arg249.

Belongs to the MetA family. Homodimer.

It localises to the cytoplasm. The catalysed reaction is L-homoserine + succinyl-CoA = O-succinyl-L-homoserine + CoA. The protein operates within amino-acid biosynthesis; L-methionine biosynthesis via de novo pathway; O-succinyl-L-homoserine from L-homoserine: step 1/1. In terms of biological role, transfers a succinyl group from succinyl-CoA to L-homoserine, forming succinyl-L-homoserine. This is Homoserine O-succinyltransferase from Escherichia coli (strain SE11).